Consider the following 371-residue polypeptide: MALETFVNSEPFTFGVELEIQVVNTHNYDLTKAASDLMRLIQGETFPGNITPEITESMIELSTGICHSHEQAVSELHAIRDVLVKAADQLNVGLAGGGTHAFQQWSDRQIYDAPRFQYISELYGYLAKQFTVFGQHVHIGCPDPDSALFLLHSMSRFIPHFIALSASSPFVQNVDTGFHSARLNSVFAFPLSGRAPFVLTWDSFEEYFTKMVNTGVVNSMKDFYWDIRPKPGYGTIEVRVMDTPLSVDRAAAIACYIQTLARYLLTDRPLKLSEDDYLVYTFNRFEACRFGLEGTCVNPQTGERRTIAEDILDTLDRIAPHAAALGSRAALDEIGALAKARVNDASWLRTVFKQEKSLNETVRQQCLRWRE.

The protein belongs to the glutamate--cysteine ligase type 2 family. YbdK subfamily.

The catalysed reaction is L-cysteine + L-glutamate + ATP = gamma-L-glutamyl-L-cysteine + ADP + phosphate + H(+). ATP-dependent carboxylate-amine ligase which exhibits weak glutamate--cysteine ligase activity. This chain is Putative glutamate--cysteine ligase 2, found in Burkholderia cenocepacia (strain HI2424).